We begin with the raw amino-acid sequence, 159 residues long: Endoribonuclease YbeY (159 aa).

Histidine 126, histidine 130, and histidine 136 together coordinate Zn(2+).

It belongs to the endoribonuclease YbeY family. Zn(2+) is required as a cofactor.

The protein localises to the cytoplasm. Its function is as follows. Single strand-specific metallo-endoribonuclease involved in late-stage 70S ribosome quality control and in maturation of the 3' terminus of the 16S rRNA. The chain is Endoribonuclease YbeY from Thermodesulfovibrio yellowstonii (strain ATCC 51303 / DSM 11347 / YP87).